Reading from the N-terminus, the 115-residue chain is MIVGIGVDVVDIERFGRQLERTPGLRDRLFVPAERELNTRSLAARFAAKEAVAKVLGAPAGMNWQDCWIGLDQNGPTIQVKGTVLAVAESKGVKRWHLSMSHDGGIATATVLAEG.

Mg(2+)-binding residues include aspartate 8 and glutamate 50.

It belongs to the P-Pant transferase superfamily. AcpS family. Mg(2+) is required as a cofactor.

It is found in the cytoplasm. The catalysed reaction is apo-[ACP] + CoA = holo-[ACP] + adenosine 3',5'-bisphosphate + H(+). Transfers the 4'-phosphopantetheine moiety from coenzyme A to a Ser of acyl-carrier-protein. This is Holo-[acyl-carrier-protein] synthase from Arthrobacter sp. (strain FB24).